The following is a 440-amino-acid chain: Chromosome partition protein MukF (440 aa).

The interval Leu208–Ile236 is leucine-zipper.

The protein belongs to the MukF family. Interacts, and probably forms a ternary complex, with MukE and MukB via its C-terminal region. The complex formation is stimulated by calcium or magnesium. It is required for an interaction between MukE and MukB.

It localises to the cytoplasm. The protein localises to the nucleoid. Involved in chromosome condensation, segregation and cell cycle progression. May participate in facilitating chromosome segregation by condensation DNA from both sides of a centrally located replisome during cell division. Not required for mini-F plasmid partitioning. Probably acts via its interaction with MukB and MukE. Overexpression results in anucleate cells. It has a calcium binding activity. The chain is Chromosome partition protein MukF from Salmonella arizonae (strain ATCC BAA-731 / CDC346-86 / RSK2980).